The sequence spans 121 residues: Phosphoribosyl-ATP pyrophosphatase (121 aa).

It belongs to the PRA-PH family.

The protein resides in the cytoplasm. The catalysed reaction is 1-(5-phospho-beta-D-ribosyl)-ATP + H2O = 1-(5-phospho-beta-D-ribosyl)-5'-AMP + diphosphate + H(+). The protein operates within amino-acid biosynthesis; L-histidine biosynthesis; L-histidine from 5-phospho-alpha-D-ribose 1-diphosphate: step 2/9. The sequence is that of Phosphoribosyl-ATP pyrophosphatase from Burkholderia multivorans (strain ATCC 17616 / 249).